The following is a 227-amino-acid chain: Small ribosomal subunit protein uS3 (227 aa).

A KH type-2 domain is found at 39-108; the sequence is IRKFIEERYK…EVIVNVDEVK (70 aa).

Belongs to the universal ribosomal protein uS3 family. As to quaternary structure, part of the 30S ribosomal subunit. Forms a tight complex with proteins S10 and S14.

Functionally, binds the lower part of the 30S subunit head. Binds mRNA in the 70S ribosome, positioning it for translation. This Sulfurihydrogenibium sp. (strain YO3AOP1) protein is Small ribosomal subunit protein uS3.